A 119-amino-acid polypeptide reads, in one-letter code: Methylglyoxal synthase (119 aa).

The 119-residue stretch at 1 to 119 folds into the MGS-like domain; it reads MRIALIAHDK…GTADLIIRQF (119 aa). Substrate contacts are provided by residues histidine 8, lysine 12, 34 to 37, and 54 to 55; these read TGTT and SG. Aspartate 60 (proton donor/acceptor) is an active-site residue. Histidine 87 provides a ligand contact to substrate.

Belongs to the methylglyoxal synthase family.

The enzyme catalyses dihydroxyacetone phosphate = methylglyoxal + phosphate. Catalyzes the formation of methylglyoxal from dihydroxyacetone phosphate. This chain is Methylglyoxal synthase, found in Clostridium botulinum (strain Alaska E43 / Type E3).